The primary structure comprises 484 residues: N-succinylglutamate 5-semialdehyde dehydrogenase (484 aa).

NAD(+) is bound at residue glycine 221 to glycine 226. Residues glutamate 244 and cysteine 278 contribute to the active site.

The protein belongs to the aldehyde dehydrogenase family. AstD subfamily.

It catalyses the reaction N-succinyl-L-glutamate 5-semialdehyde + NAD(+) + H2O = N-succinyl-L-glutamate + NADH + 2 H(+). Its pathway is amino-acid degradation; L-arginine degradation via AST pathway; L-glutamate and succinate from L-arginine: step 4/5. Its function is as follows. Catalyzes the NAD-dependent reduction of succinylglutamate semialdehyde into succinylglutamate. This is N-succinylglutamate 5-semialdehyde dehydrogenase from Caulobacter sp. (strain K31).